Reading from the N-terminus, the 399-residue chain is MKKEDLMRSGFATRAIHGGAIENAFGCLATPIYQTSTFVFDTAEQGGRRFAGEEDGYIYTRLGNPNCTQVEEKLAMLEGGEAAASASSGIGAISSAIWVCVKAGDHIVAGKTLYGCTFAFLTHGLSRYGVEVTLVDTRHPEEVEAAIRPNTKLVYLETPANPNMYLTDIKAVCDIAHKHEGVRVMVDNTYCTPYICRPLELGADIVVHSATKYLNGHGDVIAGFVVGKEDYIKEVKLVGVKDLTGANMSPFDAYLISRGMKTLQIRMEQHCRNAQTVAEFLEKHPAVEAVYFPGLPSFPQYELAKKQMALPGAMIAFEVKGGCEAGKKLMNNLHLCSLAVSLGDTETLIQHPASMTHSPYTPEERAASDISEGLVRLSVGLENVEDIIADLKHGLDSLI.

Pyridoxal 5'-phosphate is bound by residues 59-61 (YTR) and 89-90 (GI). Tyrosine 114 is a binding site for substrate. Pyridoxal 5'-phosphate is bound at residue 209–211 (SAT). Lysine 212 is subject to N6-(pyridoxal phosphate)lysine. Position 376 (arginine 376) interacts with substrate.

It belongs to the trans-sulfuration enzymes family. L-methionine gamma-lyase subfamily. Homotetramer; dimer of active dimers. Pyridoxal 5'-phosphate is required as a cofactor.

It catalyses the reaction L-methionine + H2O = methanethiol + 2-oxobutanoate + NH4(+). The enzyme catalyses L-homocysteine + H2O = 2-oxobutanoate + hydrogen sulfide + NH4(+) + H(+). In terms of biological role, catalyzes the alpha,gamma-elimination of L-methionine to produce methanethiol, 2-oxobutanoate and ammonia; methanethiol (methyl mercaptan) is considered to be one of the main causes of the oral malodor in periodontal disease and may also play a role in the pathogenicity of P.gingivalis in that disease. Is also able to catalyze the alpha,gamma-elimination of L-homocysteine. This is L-methionine gamma-lyase from Porphyromonas gingivalis (strain ATCC BAA-308 / W83).